A 198-amino-acid chain; its full sequence is Elongation factor Ts (198 aa).

The tract at residues 81–84 (TDFV) is involved in Mg(2+) ion dislocation from EF-Tu.

The protein belongs to the EF-Ts family.

It is found in the cytoplasm. Its function is as follows. Associates with the EF-Tu.GDP complex and induces the exchange of GDP to GTP. It remains bound to the aminoacyl-tRNA.EF-Tu.GTP complex up to the GTP hydrolysis stage on the ribosome. The chain is Elongation factor Ts from Herpetosiphon aurantiacus (strain ATCC 23779 / DSM 785 / 114-95).